The chain runs to 206 residues: FMN-dependent NADH:quinone oxidoreductase (206 aa).

Residues Ser-9, 15–17, 95–98, and 139–142 each bind FMN; these read SVS, MYNF, and SRGG.

It belongs to the azoreductase type 1 family. As to quaternary structure, homodimer. FMN serves as cofactor.

The catalysed reaction is 2 a quinone + NADH + H(+) = 2 a 1,4-benzosemiquinone + NAD(+). The enzyme catalyses N,N-dimethyl-1,4-phenylenediamine + anthranilate + 2 NAD(+) = 2-(4-dimethylaminophenyl)diazenylbenzoate + 2 NADH + 2 H(+). Quinone reductase that provides resistance to thiol-specific stress caused by electrophilic quinones. In terms of biological role, also exhibits azoreductase activity. Catalyzes the reductive cleavage of the azo bond in aromatic azo compounds to the corresponding amines. In Legionella pneumophila subsp. pneumophila (strain Philadelphia 1 / ATCC 33152 / DSM 7513), this protein is FMN-dependent NADH:quinone oxidoreductase.